A 373-amino-acid polypeptide reads, in one-letter code: Arfaptin-1 (373 aa).

Residues 1 to 47 are disordered; the sequence is MAQESPKNSAAEIPVTSNGEVDDSREHSFNRDLKHSLPSGLGLSETQ. N-acetylalanine is present on A2. 7 positions are modified to phosphoserine: S5, S28, S36, S39, S69, S79, and S132. The segment covering 22 to 35 has biased composition (basic and acidic residues); it reads DDSREHSFNRDLKH. In terms of domain architecture, AH spans 153 to 353; the sequence is TVDLELEAQI…NQKQLEQTLK (201 aa). T361 carries the phosphothreonine modification.

As to quaternary structure, forms homodimers or heterodimers with ARFIP2. Interacts with non-myristoylated GTP-bound ARF3, but not to GDP-bound ARF3. Interacts with ARF1. Binds with lower affinity to ARF5 and with very little affinity to ARF6. Interacts with ARL1. Interacts with ATG9A. Post-translationally, phosphorylated by PRKD1; phosphorylation delocalizes ARFIP1 from the Golgi and disrupts its ability to inhibit the activity of ADP-ribosylation factor, an important component of the vesicle scission machinery. As to expression, ubiquitously expressed. Higher levels in liver, pancreas, placenta, skeletal muscle and heart.

Its subcellular location is the golgi apparatus. It localises to the trans-Golgi network membrane. Functionally, plays a role in controlling biogenesis of secretory granules at the trans-Golgi network. Mechanistically, binds ARF-GTP at the neck of a growing secretory granule precursor and forms a protective scaffold. Once the granule precursor has been completely loaded, active PRKD1 phosphorylates ARFIP1 and releases it from ARFs. In turn, ARFs induce fission. Through this mechanism, ensures proper secretory granule formation at the Golgi of pancreatic beta cells. The sequence is that of Arfaptin-1 from Homo sapiens (Human).